Consider the following 400-residue polypeptide: Deoxyguanosinetriphosphate triphosphohydrolase-like protein (400 aa).

The 129-residue stretch at 76–204 (RLTHTLEVAQ…VNIADPLAYC (129 aa)) folds into the HD domain.

The protein belongs to the dGTPase family. Type 2 subfamily.

The protein is Deoxyguanosinetriphosphate triphosphohydrolase-like protein of Syntrophus aciditrophicus (strain SB).